Consider the following 203-residue polypeptide: A-type ATP synthase subunit E (203 aa).

The protein belongs to the V-ATPase E subunit family. As to quaternary structure, has multiple subunits with at least A(3), B(3), C, D, E, F, H, I and proteolipid K(x).

It is found in the cell membrane. Component of the A-type ATP synthase that produces ATP from ADP in the presence of a proton gradient across the membrane. In Methanococcus aeolicus (strain ATCC BAA-1280 / DSM 17508 / OCM 812 / Nankai-3), this protein is A-type ATP synthase subunit E.